The chain runs to 238 residues: Ribonuclease PH (238 aa).

Phosphate is bound by residues R86 and 124-126 (GTR).

The protein belongs to the RNase PH family. As to quaternary structure, homohexameric ring arranged as a trimer of dimers.

It carries out the reaction tRNA(n+1) + phosphate = tRNA(n) + a ribonucleoside 5'-diphosphate. In terms of biological role, phosphorolytic 3'-5' exoribonuclease that plays an important role in tRNA 3'-end maturation. Removes nucleotide residues following the 3'-CCA terminus of tRNAs; can also add nucleotides to the ends of RNA molecules by using nucleoside diphosphates as substrates, but this may not be physiologically important. Probably plays a role in initiation of 16S rRNA degradation (leading to ribosome degradation) during starvation. The polypeptide is Ribonuclease PH (Vibrio vulnificus (strain CMCP6)).